Reading from the N-terminus, the 190-residue chain is MDRDEEPLSARPALETESLRFLHVTVGSLLASYGWYILFSCILLYIVIQRLSLRLRALRQRQLDQAETVLEPDVVVKRQEALAAARLRMQEDLNAQVEKHKEKLRQLEEEKRRQKIEMWDSMQEGRSYKRNSGRPQEEDGPGPSTSSVIPKGKSDKKPLRGGGYNPLTGEGGGTCSWRPGRRGPSSGGUN.

Residues 28-48 (SLLASYGWYILFSCILLYIVI) traverse the membrane as a helical segment. The segment at 78-90 (RQEALAAARLRMQ) is VCP/p97-interacting motif (VIM). The segment at 115–190 (KIEMWDSMQE…RRGPSSGGUN (76 aa)) is disordered. The segment covering 160-174 (RGGGYNPLTGEGGGT) has biased composition (gly residues). Sec-189 is a non-standard amino acid (selenocysteine).

This sequence belongs to the selenoprotein S family. Interacts with DERL1 and (via VIM motif) with VCP, suggesting that it forms a membrane complex with DERL1 that serves as a receptor for VCP. Also interacts with DERL2, DERL3 and SELENOK. The SELENOK-SELENOS complex interacts with VCP. Interacts with CCDC47. Post-translationally, truncated SELENOS proteins produced by failed UGA/Sec decoding are ubiquitinated by the CRL2(KLHDC2) and CRL2(KLHDC3) complexes, which recognizes the glycine (Gly) at the C-terminus of truncated SELENOS proteins. Truncated SELENOS proteins produced by failed UGA/Sec decoding are also ubiquitinated by the CRL5(KLHDC1) complex.

The protein localises to the endoplasmic reticulum membrane. The protein resides in the cytoplasm. In terms of biological role, involved in the degradation process of misfolded endoplasmic reticulum (ER) luminal proteins. Participates in the transfer of misfolded proteins from the ER to the cytosol, where they are destroyed by the proteasome in a ubiquitin-dependent manner. Probably acts by serving as a linker between DERL1, which mediates the retrotranslocation of misfolded proteins into the cytosol, and the ATPase complex VCP, which mediates the translocation and ubiquitination. The sequence is that of Selenoprotein S from Mus musculus (Mouse).